A 277-amino-acid polypeptide reads, in one-letter code: Large ribosomal subunit protein uL2 (277 aa).

Residues 212–277 (RWRGKRPHVR…KFIVRGRKSK (66 aa)) form a disordered region. A compositionally biased stretch (basic residues) spans 254 to 277 (TAGKKTRDKKKASTKFIVRGRKSK).

This sequence belongs to the universal ribosomal protein uL2 family. In terms of assembly, part of the 50S ribosomal subunit. Forms a bridge to the 30S subunit in the 70S ribosome.

Its function is as follows. One of the primary rRNA binding proteins. Required for association of the 30S and 50S subunits to form the 70S ribosome, for tRNA binding and peptide bond formation. It has been suggested to have peptidyltransferase activity; this is somewhat controversial. Makes several contacts with the 16S rRNA in the 70S ribosome. The sequence is that of Large ribosomal subunit protein uL2 from Leuconostoc mesenteroides subsp. mesenteroides (strain ATCC 8293 / DSM 20343 / BCRC 11652 / CCM 1803 / JCM 6124 / NCDO 523 / NBRC 100496 / NCIMB 8023 / NCTC 12954 / NRRL B-1118 / 37Y).